The following is a 364-amino-acid chain: Probable dual-specificity RNA methyltransferase RlmN (364 aa).

Glu106 acts as the Proton acceptor in catalysis. Residues 112–351 (YPHRNTVCIS…CTVRDTRGRE (240 aa)) form the Radical SAM core domain. The cysteines at positions 119 and 356 are disulfide-linked. The [4Fe-4S] cluster site is built by Cys126, Cys130, and Cys133. S-adenosyl-L-methionine is bound by residues 177–178 (GE), Ser211, 234–236 (SLH), and Asn313. Cys356 (S-methylcysteine intermediate) is an active-site residue.

It belongs to the radical SAM superfamily. RlmN family. The cofactor is [4Fe-4S] cluster.

Its subcellular location is the cytoplasm. The enzyme catalyses adenosine(2503) in 23S rRNA + 2 reduced [2Fe-2S]-[ferredoxin] + 2 S-adenosyl-L-methionine = 2-methyladenosine(2503) in 23S rRNA + 5'-deoxyadenosine + L-methionine + 2 oxidized [2Fe-2S]-[ferredoxin] + S-adenosyl-L-homocysteine. It carries out the reaction adenosine(37) in tRNA + 2 reduced [2Fe-2S]-[ferredoxin] + 2 S-adenosyl-L-methionine = 2-methyladenosine(37) in tRNA + 5'-deoxyadenosine + L-methionine + 2 oxidized [2Fe-2S]-[ferredoxin] + S-adenosyl-L-homocysteine. Specifically methylates position 2 of adenine 2503 in 23S rRNA and position 2 of adenine 37 in tRNAs. In Mycolicibacterium paratuberculosis (strain ATCC BAA-968 / K-10) (Mycobacterium paratuberculosis), this protein is Probable dual-specificity RNA methyltransferase RlmN.